The sequence spans 466 residues: MSSIRLYNTLTRKKELFEPLEPNKVKMYVCGPTVYNYIHIGNARAAIVFDTIRRYLEFRGYEVKYVSNFTDVDDKLIKAARELGEDVPTIAERFIQAYFEDITALGCKKADVHPRVTENIDTIIEFIQTLIDRGYAYEVDGDVYYRTRKFKEYGKLSHQSIDELKAGARIEVGEKKEDPLDFALWKAAKEGEICWDSPWGKGRPGWHIECSAMARKYLGDTIDIHAGGQDLTFPHHENEIAQSEALTGKPFAKYWLHNGYLNINNEKMSKSLGNFVLVHDIIQQIDPQVLRFFMLSVHYRHPINYSEELLESAKKGLERLKTSYFNLKHRLQSSTNLTDDDDQWLARIQEQHEAFIREMDDDFNTANGIAVLFELSKQANLYLLEKNTSERVIHAFLREFEQLLDVLGITLQEEELLDEEIEALIQKRNEARKNRNFALADQIRDELKAKNIILEDTPQGTRWKRG.

Zn(2+) is bound at residue cysteine 30. The 'HIGH' region signature appears at 32–42 (PTVYNYIHIGN). Zn(2+)-binding residues include cysteine 210, histidine 235, and glutamate 239. A 'KMSKS' region motif is present at residues 267–271 (KMSKS). Lysine 270 provides a ligand contact to ATP. Serine 271 is modified (phosphoserine).

This sequence belongs to the class-I aminoacyl-tRNA synthetase family. As to quaternary structure, monomer. Zn(2+) serves as cofactor.

It is found in the cytoplasm. It catalyses the reaction tRNA(Cys) + L-cysteine + ATP = L-cysteinyl-tRNA(Cys) + AMP + diphosphate. This chain is Cysteine--tRNA ligase, found in Geobacillus sp. (strain WCH70).